An 804-amino-acid polypeptide reads, in one-letter code: Endoplasmin (804 aa).

The signal sequence occupies residues 1–21 (MRALWVLGLCCVLLTFGSVRA). The SRT pseudosubstrate motif signature appears at 42 to 44 (SRT). N-linked (GlcNAc...) asparagine glycosylation occurs at N62. A Phosphoserine modification is found at S64. A glycan (N-linked (GlcNAc...) asparagine) is linked at N107. Residues N107, D149, and N162 each coordinate ATP. K168 carries the post-translational modification N6-(2-hydroxyisobutyryl)lysine. Residue S172 is modified to Phosphoserine. Residue F199 coordinates ATP. N217 carries N-linked (GlcNAc...) asparagine glycosylation. The tract at residues 288 to 323 (TVEEPAEEEEAAKEDKEESDDEAAVEEEEDEKKPKT) is disordered. Acidic residues predominate over residues 289 to 317 (VEEPAEEEEAAKEDKEESDDEAAVEEEED). Phosphoserine occurs at positions 306 and 403. At K404 the chain carries N6-succinyllysine. A glycan (N-linked (GlcNAc...) asparagine) is linked at N445. At S447 the chain carries Phosphoserine. K479 bears the N6-acetyllysine mark. N-linked (GlcNAc...) asparagine glycans are attached at residues N481 and N502. At K633 the chain carries N6-succinyllysine. Residues 750–804 (DPDAKVEEEPEEEPEETTEDTAEDTEQDEEEEMDAGTDEEEQETAEKSTAEKDEL) form a disordered region. Over residues 757 to 792 (EEPEEEPEETTEDTAEDTEQDEEEEMDAGTDEEEQE) the composition is skewed to acidic residues. T786 carries the post-translational modification Phosphothreonine. Basic and acidic residues predominate over residues 793-804 (TAEKSTAEKDEL). Positions 801 to 804 (KDEL) match the Prevents secretion from ER motif.

This sequence belongs to the heat shock protein 90 family. As to quaternary structure, homodimer; disulfide-linked. Component of an EIF2 complex at least composed of CELF1/CUGBP1, CALR, CALR3, EIF2S1, EIF2S2, HSP90B1 and HSPA5. Part of a large chaperone multiprotein complex comprising DNAJB11, HSP90B1, HSPA5, HYOU, PDIA2, PDIA4, PDIA6, PPIB, SDF2L1, UGGT1 and very small amounts of ERP29, but not, or at very low levels, CALR nor CANX. Interacts with AIMP1; regulates its retention in the endoplasmic reticulum. Hyperglycosylated form interacts with OS9; promoting its degradation by the endoplasmic reticulum associated degradation (ERAD). Interacts with CNPY3. This interaction is disrupted in the presence of ATP. Interacts with TLR4 and TLR9, but not with TLR3. Interacts with MZB1 in a calcium-dependent manner. Interacts with METTL23. Interacts with IL1B; the interaction facilitates cargo translocation into the ERGIC. Interacts with EIF2AK3. Phosphorylated by CK2. In terms of processing, N-glycosylated cotranslationally at Asn-217 by STT3A-containing OST-A complex: this glycosylation is constitutive. In response to various stress, 5 additional facultative sites (Asn-62, Asn-107, Asn-445, Asn-481 and Asn-502) can be glycosylated post-translationally by STT3B-containing OST-B complex, leading to a hyperglycosylated form that is degraded by the ER-associated degradation (ERAD) pathway. In normal conditions, the OST-A complex together with CCDC134 prevent glycosylation at facultative sites during protein folding, thereby preventing hyperglycosylation. Mechanistically, nascent HSP90B1 is tethered during translation to a specialized CCDC134-containing translocon that forms a microenvironment for its folding, in which STT3A associates with the SRT pseudosubstrate motif, and prevents access to facultative glycosylation sites until folding is completed, rendering its facultative sites inaccessible to the OST-B complex.

It localises to the endoplasmic reticulum lumen. It is found in the sarcoplasmic reticulum lumen. The protein localises to the melanosome. The enzyme catalyses ATP + H2O = ADP + phosphate + H(+). In terms of biological role, ATP-dependent chaperone involved in the processing of proteins in the endoplasmic reticulum, regulating their transport. Together with MESD, acts as a modulator of the Wnt pathway by promoting the folding of LRP6, a coreceptor of the canonical Wnt pathway. When associated with CNPY3, required for proper folding of Toll-like receptors. Promotes folding and trafficking of TLR4 to the cell surface. May participate in the unfolding of cytosolic leaderless cargos (lacking the secretion signal sequence) such as the interleukin 1/IL-1 to facilitate their translocation into the ERGIC (endoplasmic reticulum-Golgi intermediate compartment) and secretion; the translocation process is mediated by the cargo receptor TMED10. The protein is Endoplasmin (HSP90B1) of Bos taurus (Bovine).